Consider the following 315-residue polypeptide: DNA-directed RNA polymerase subunit alpha (315 aa).

The interval 1-228 (MAQFQIECVE…DLFNPLKDIS (228 aa)) is alpha N-terminal domain (alpha-NTD). The alpha C-terminal domain (alpha-CTD) stretch occupies residues 243-315 (TAQIPIEELQ…LPQERSSKHN (73 aa)).

Belongs to the RNA polymerase alpha chain family. As to quaternary structure, homodimer. In cyanobacteria the RNAP catalytic core is composed of 2 alpha, 1 beta, 1 beta', 1 gamma and 1 omega subunit. When a sigma factor is associated with the core the holoenzyme is formed, which can initiate transcription.

It carries out the reaction RNA(n) + a ribonucleoside 5'-triphosphate = RNA(n+1) + diphosphate. Its function is as follows. DNA-dependent RNA polymerase catalyzes the transcription of DNA into RNA using the four ribonucleoside triphosphates as substrates. The sequence is that of DNA-directed RNA polymerase subunit alpha from Nostoc sp. (strain PCC 7120 / SAG 25.82 / UTEX 2576).